The sequence spans 335 residues: Glyceraldehyde-3-phosphate dehydrogenase (335 aa).

Residues 11 to 12 and G110 each bind NAD(+); that span reads TI. 139-141 lines the D-glyceraldehyde 3-phosphate pocket; sequence SCN. The active-site Nucleophile is C140. R168 contributes to the NAD(+) binding site. Position 194–195 (194–195) interacts with D-glyceraldehyde 3-phosphate; the sequence is HG. Q301 serves as a coordination point for NAD(+).

It belongs to the glyceraldehyde-3-phosphate dehydrogenase family. In terms of assembly, homotetramer.

It is found in the cytoplasm. It catalyses the reaction D-glyceraldehyde 3-phosphate + phosphate + NADP(+) = (2R)-3-phospho-glyceroyl phosphate + NADPH + H(+). It carries out the reaction D-glyceraldehyde 3-phosphate + phosphate + NAD(+) = (2R)-3-phospho-glyceroyl phosphate + NADH + H(+). It functions in the pathway carbohydrate degradation; glycolysis; pyruvate from D-glyceraldehyde 3-phosphate: step 1/5. This is Glyceraldehyde-3-phosphate dehydrogenase from Halobacterium salinarum (strain ATCC 29341 / DSM 671 / R1).